Consider the following 230-residue polypeptide: Orotidine 5'-phosphate decarboxylase (230 aa).

Residues Asp8, Lys32, 59–68 (DLKLYDIPNT), Thr118, Arg178, Gln187, Gly207, and Arg208 contribute to the substrate site. Lys61 acts as the Proton donor in catalysis.

It belongs to the OMP decarboxylase family. Type 1 subfamily. As to quaternary structure, homodimer.

The catalysed reaction is orotidine 5'-phosphate + H(+) = UMP + CO2. Its pathway is pyrimidine metabolism; UMP biosynthesis via de novo pathway; UMP from orotate: step 2/2. In terms of biological role, catalyzes the decarboxylation of orotidine 5'-monophosphate (OMP) to uridine 5'-monophosphate (UMP). The chain is Orotidine 5'-phosphate decarboxylase from Nautilia profundicola (strain ATCC BAA-1463 / DSM 18972 / AmH).